A 147-amino-acid polypeptide reads, in one-letter code: Deoxyuridine 5'-triphosphate nucleotidohydrolase (147 aa).

Arg24 is a binding site for Mg(2+). Residues 68–70 (PRS), 82–85 (GVID), Tyr88, Gly93, Ile95, and Arg111 contribute to the dUTP site.

It belongs to the dUTPase family. Requires Mg(2+) as cofactor.

It carries out the reaction dUTP + H2O = dUMP + diphosphate + H(+). Its function is as follows. This enzyme is involved in nucleotide metabolism: it produces dUMP, the immediate precursor of thymidine nucleotides and it decreases the intracellular concentration of dUTP so that uracil cannot be incorporated into DNA. This Homo sapiens (Human) protein is Deoxyuridine 5'-triphosphate nucleotidohydrolase (OPG046).